A 215-amino-acid chain; its full sequence is RNA pyrophosphohydrolase (215 aa).

One can recognise a Nudix hydrolase domain in the interval 6–149 (GFRPNVGIIL…KRDVYQLALT (144 aa)). The Nudix box signature appears at 38–59 (GGIKYGETPMQAMYRELHEETG).

The protein belongs to the Nudix hydrolase family. RppH subfamily. It depends on a divalent metal cation as a cofactor.

Accelerates the degradation of transcripts by removing pyrophosphate from the 5'-end of triphosphorylated RNA, leading to a more labile monophosphorylated state that can stimulate subsequent ribonuclease cleavage. The sequence is that of RNA pyrophosphohydrolase from Burkholderia lata (strain ATCC 17760 / DSM 23089 / LMG 22485 / NCIMB 9086 / R18194 / 383).